Reading from the N-terminus, the 200-residue chain is Intraflagellar transport protein 43 homolog (200 aa).

2 disordered regions span residues K56–P76 and E175–Y200. The segment covering E175–R192 has biased composition (basic and acidic residues).

Belongs to the IFT43 family. Component of the IFT complex A (IFT-A) composed of at least che-11, daf-10, dyf-2, ift-139, ift-43 and ifta-1. Expressed in ciliated sensory neurons.

Its subcellular location is the cell projection. It is found in the cilium. As a component of IFT complex A (IFT-A), a complex required for retrograde ciliary transport and entry into cilia of G protein-coupled receptors (GPCRs), it is involved in ciliogenesis. In particular, may act redundantly with the intraflagellar transport protein ift-139 to regulate the transport of specific ciliary cargo proteins such as che-3 which are related to motility. The chain is Intraflagellar transport protein 43 homolog from Caenorhabditis elegans.